Reading from the N-terminus, the 72-residue chain is Gene 79 protein (72 aa).

The protein is Gene 79 protein (79) of Mycobacterium (Mycobacteriophage L5).